A 400-amino-acid polypeptide reads, in one-letter code: MYNVKEDFPIFRNQKDPYIYLDSAATTHKPQCVIDAVTDYYSFSYATVNRAIYSASHDISSAYWRVRSKVAAWIGARYDQEIVFTRGTTSSLNLLAIAANDSWLAGGTVVVSEAEHHANILSWEIACRRSGATVKKVRVNDEGIIDLSHLEKLLKQGVQLVSLAHVSNVSGAVLPVQEVAFLVHRYGALLAIDGAQGVGSGPLNLSGWDVDFYAFSGHKLYAPTGIGVLYGKRELLESLPPVEGGGDMVVVYDSESSRYQEPPLRFEAGTPHIAGVLGLGAAIDYLQALPFSVSDHLTALTRFLYNRLLTIPDIQIVGPQQGTPRGCLCSIIIPGVQASDLGFLLDGKGIAVRSGHQCSQPAMARWDLGHVLRASLGVYNDQQDVISFVEALEDILRSYR.

Residue K219 is modified to N6-(pyridoxal phosphate)lysine. Residue C358 is the Cysteine persulfide intermediate of the active site.

The protein belongs to the class-V pyridoxal-phosphate-dependent aminotransferase family. Csd subfamily. Requires pyridoxal 5'-phosphate as cofactor.

It carries out the reaction (sulfur carrier)-H + L-cysteine = (sulfur carrier)-SH + L-alanine. Functionally, catalyzes the removal of elemental sulfur and selenium atoms from L-cysteine, L-cystine, L-selenocysteine, and L-selenocystine to produce L-alanine. This chain is Probable cysteine desulfurase (csd), found in Chlamydia muridarum (strain MoPn / Nigg).